The sequence spans 160 residues: uncharacterized protein (160 aa).

This is an uncharacterized protein from Bacillus subtilis (strain 168).